Consider the following 376-residue polypeptide: MRVESLLLALQCLLGFVHYSGALSTCSPLDLELIKRKRIEAIRGQILSKLRLSKEPEVDEEKESQNIPAELISVYNSTVELNEEQAAPPEQPKEDPVEEEYYAKEVHKFTIKLMEKNPDKFLWFNITDISQTLGLNRIISQVELRLLITTFPDGSEQRLELYQVIGNKSRYLESRFIPNQRKWLSFDVTQTLKDWLQRSEAEQGFQLKMADNCDPQKTFQLKIPGLVLVRGDTETLAVNMPRPHILVMSLPLDGNNSSKSRRKRQTETDQVCTDKSDGCCVRSLYIDFRKDLGWKWIHEPSGYYANYCTGSCSFVWTSENKYSQVLALYKHHNPGASAQPCRVPQVLNPLPIFYYVGRQHKVEQLSNMIVKTCKCC.

Residues 1-22 form the signal peptide; sequence MRVESLLLALQCLLGFVHYSGA. Residues 23-68 are straightjacket domain; the sequence is LSTCSPLDLELIKRKRIEAIRGQILSKLRLSKEPEVDEEKESQNIP. Residues 69–258 are arm domain; the sequence is AELISVYNST…SLPLDGNNSS (190 aa). N-linked (GlcNAc...) asparagine glycosylation is found at asparagine 76, asparagine 125, and asparagine 167. Positions 214-238 are bowtie tail; that stretch reads DPQKTFQLKIPGLVLVRGDTETLAV. Positions 230 to 232 match the Cell attachment site motif; sequence RGD. Cystine bridges form between cysteine 272/cysteine 280, cysteine 308/cysteine 373, and cysteine 312/cysteine 375.

Belongs to the TGF-beta family. In terms of assembly, latency-associated peptide: Homodimer; disulfide-linked. Latency-associated peptide: Interacts with Transforming growth factor beta-1 (TGF-beta-1) chain; interaction is non-covalent and maintains (TGF-beta-1) in a latent state; each Latency-associated peptide (LAP) monomer interacts with TGF-beta-1 in the other monomer. Transforming growth factor beta-1: Homodimer; disulfide-linked. Transforming growth factor beta-1: Interacts with TGF-beta receptors (tgfbr1 and tgfbr2), leading to signal transduction. Interacts with EFEMP2. In terms of processing, transforming growth factor beta-1 proprotein: The precursor proprotein is cleaved in the Golgi apparatus to form Transforming growth factor beta-1 (TGF-beta-1) and Latency-associated peptide (LAP) chains, which remain non-covalently linked, rendering TGF-beta-1 inactive.

It localises to the secreted. The protein resides in the extracellular space. The protein localises to the extracellular matrix. Its function is as follows. Transforming growth factor beta-1 proprotein: Precursor of the Latency-associated peptide (LAP) and Transforming growth factor beta-1 (TGF-beta-1) chains, which constitute the regulatory and active subunit of TGF-beta-1, respectively. In terms of biological role, required to maintain the Transforming growth factor beta-1 (TGF-beta-1) chain in a latent state during storage in extracellular matrix. Associates non-covalently with TGF-beta-1 and regulates its activation via interaction with 'milieu molecules', such as LTBP1, LRRC32/GARP and LRRC33/NRROS, that control activation of TGF-beta-1. Interaction with integrins (ITGAV:ITGB6 or ITGAV:ITGB8) results in distortion of the Latency-associated peptide chain and subsequent release of the active TGF-beta-1. Functionally, transforming growth factor beta-1: Multifunctional protein that regulates the growth and differentiation of various cell types and is involved in various processes, such as normal development, immune function, microglia function and responses to neurodegeneration. Activation into mature form follows different steps: following cleavage of the proprotein in the Golgi apparatus, Latency-associated peptide (LAP) and Transforming growth factor beta-1 (TGF-beta-1) chains remain non-covalently linked rendering TGF-beta-1 inactive during storage in extracellular matrix. At the same time, LAP chain interacts with 'milieu molecules', such as ltbp1, lrrc32/garp and lrrc33/nrros that control activation of TGF-beta-1 and maintain it in a latent state during storage in extracellular milieus. TGF-beta-1 is released from LAP by integrins (ITGAV:ITGB6 or ITGAV:ITGB8): integrin-binding to LAP stabilizes an alternative conformation of the LAP bowtie tail and results in distortion of the LAP chain and subsequent release of the active TGF-beta-1. Once activated following release of LAP, TGF-beta-1 acts by binding to TGF-beta receptors (tgfbr1 and tgfbr2), which transduce signal. While expressed by many cells types, TGF-beta-1 only has a very localized range of action within cell environment thanks to fine regulation of its activation by Latency-associated peptide chain (LAP) and 'milieu molecules'. Plays an important role in bone remodeling: acts as a potent stimulator of osteoblastic bone formation. Can promote either T-helper 17 cells (Th17) or regulatory T-cells (Treg) lineage differentiation in a concentration-dependent manner. Can induce epithelial-to-mesenchymal transition (EMT) and cell migration in various cell types. This is Transforming growth factor beta-1 proprotein (tgfb1) from Cyprinus carpio (Common carp).